The sequence spans 200 residues: MIILENEANEPGFRIQQRAESETGKKGRFGGILKENPIKGFSSETLTRPLTGLFRKTGKSQRKTDDDDSQETIAAPPTNFPNMARISATIESVQINDEYAGYRDRNPETGSKLTLNEGAGVFGNAMHPLTRYFKVGDVDVSILGRSFPTEKTVDEEGPWTAQSLFNSLESRIKKERIDAKDQPSDSRSRNARETLISSKY.

Disordered stretches follow at residues 56–76 and 175–200; these read KTGK…IAAP and ERID…SSKY. A compositionally biased stretch (basic and acidic residues) spans 175–192; that stretch reads ERIDAKDQPSDSRSRNAR.

Belongs to the IFT43 family. In terms of assembly, component of the IFT complex A (IFT-A) composed of at least che-11, daf-10, dyf-2, ift-139, ift-43 and ifta-1. As to expression, expressed in ciliated sensory neurons.

It is found in the cell projection. The protein localises to the cilium. As a component of IFT complex A (IFT-A), a complex required for retrograde ciliary transport and entry into cilia of G protein-coupled receptors (GPCRs), it is involved in ciliogenesis. In particular, may act redundantly with the intraflagellar transport protein ift-139 to regulate the transport of specific ciliary cargo proteins such as che-3 which are related to motility. In Caenorhabditis elegans, this protein is Intraflagellar transport protein 43 homolog.